The following is a 434-amino-acid chain: Trigger factor (434 aa).

Residues 161-246 (GKRVSIDFVG…VNKVEARELP (86 aa)) enclose the PPIase FKBP-type domain.

The protein belongs to the FKBP-type PPIase family. Tig subfamily.

Its subcellular location is the cytoplasm. The enzyme catalyses [protein]-peptidylproline (omega=180) = [protein]-peptidylproline (omega=0). Functionally, involved in protein export. Acts as a chaperone by maintaining the newly synthesized protein in an open conformation. Functions as a peptidyl-prolyl cis-trans isomerase. The polypeptide is Trigger factor (Vibrio parahaemolyticus serotype O3:K6 (strain RIMD 2210633)).